We begin with the raw amino-acid sequence, 247 residues long: ATP synthase subunit a, chloroplastic (247 aa).

The next 5 helical transmembrane spans lie at 38-58 (QVLITSWVVIAILLGSAFIAV), 95-115 (VPFIGTLFLFIFVSNWSGALL), 134-154 (INTTVALALLTSIAYFYAGLS), 199-219 (LVVVVLVSLVPLVVPIPVMFL), and 220-240 (GLFTSGIQALIFATLAAAYIG).

Belongs to the ATPase A chain family. As to quaternary structure, F-type ATPases have 2 components, CF(1) - the catalytic core - and CF(0) - the membrane proton channel. CF(1) has five subunits: alpha(3), beta(3), gamma(1), delta(1), epsilon(1). CF(0) has four main subunits: a, b, b' and c.

It is found in the plastid. The protein resides in the chloroplast thylakoid membrane. Functionally, key component of the proton channel; it plays a direct role in the translocation of protons across the membrane. The sequence is that of ATP synthase subunit a, chloroplastic from Citrus sinensis (Sweet orange).